Consider the following 603-residue polypeptide: Methylenetetrahydrofolate reductase 1 (603 aa).

Glu21 serves as the catalytic Proton donor/acceptor. Residues Glu21–Lys26 and Thr53–Trp54 contribute to the NAD(+) site. Residues Thr53 to Trp54, His82, Arg112 to Asp114, Tyr130 to Ala131, Tyr153, and Lys173 each bind FAD. Asp114 lines the substrate pocket. Substrate contacts are provided by Gln184 and Tyr276. Position 355 is a phosphoserine (Ser355).

Belongs to the methylenetetrahydrofolate reductase family. FAD is required as a cofactor.

It catalyses the reaction (6S)-5-methyl-5,6,7,8-tetrahydrofolate + NADP(+) = (6R)-5,10-methylene-5,6,7,8-tetrahydrofolate + NADPH + H(+). The enzyme catalyses (6S)-5-methyl-5,6,7,8-tetrahydrofolate + NAD(+) = (6R)-5,10-methylene-5,6,7,8-tetrahydrofolate + NADH + H(+). Its pathway is one-carbon metabolism; tetrahydrofolate interconversion. Functionally, major methylenetetrahydrofolate reductase required to generate the methyl groups necessary for methionine synthetase to convert homocysteine to methionine. Performs 80 to 85 percent of the total methylenetetrahydrofolate reductase activity of the cells. This Schizosaccharomyces pombe (strain 972 / ATCC 24843) (Fission yeast) protein is Methylenetetrahydrofolate reductase 1 (met9).